Here is a 1595-residue protein sequence, read N- to C-terminus: Pentafunctional AROM polypeptide (1595 aa).

The tract at residues 1 to 384 (MGVPTKISIL…HEPRASTVSN (384 aa)) is 3-dehydroquinate synthase. NAD(+) is bound by residues 44–46 (DTN), 81–84 (ESSK), 114–116 (GGV), and aspartate 119. Arginine 130 is a binding site for 7-phospho-2-dehydro-3-deoxy-D-arabino-heptonate. 139 to 140 (TT) provides a ligand contact to NAD(+). Positions 146 and 152 each coordinate 7-phospho-2-dehydro-3-deoxy-D-arabino-heptonate. Lysine 161 provides a ligand contact to NAD(+). Asparagine 162 serves as a coordination point for 7-phospho-2-dehydro-3-deoxy-D-arabino-heptonate. NAD(+) is bound by residues 179-182 (FLNT) and asparagine 190. Position 194 (glutamate 194) interacts with Zn(2+). 7-phospho-2-dehydro-3-deoxy-D-arabino-heptonate contacts are provided by residues 194–197 (EVIK) and lysine 250. Glutamate 260 functions as the Proton acceptor; for 3-dehydroquinate synthase activity in the catalytic mechanism. 7-phospho-2-dehydro-3-deoxy-D-arabino-heptonate contacts are provided by residues 264 to 268 (RNLLN) and histidine 271. Histidine 271 is a Zn(2+) binding site. Catalysis depends on histidine 275, which acts as the Proton acceptor; for 3-dehydroquinate synthase activity. 7-phospho-2-dehydro-3-deoxy-D-arabino-heptonate contacts are provided by histidine 287 and lysine 356. Histidine 287 provides a ligand contact to Zn(2+). The interval 397-842 (VSPGVPKGLD…WDSLAQTFKV (446 aa)) is EPSP synthase. The active-site For EPSP synthase activity is the cysteine 824. A shikimate kinase region spans residues 866–1057 (ASIFIIGMRG…RRKENTFFVS (192 aa)). An ATP-binding site is contributed by 872-879 (GMRGAGKT). Residues 1058 to 1278 (LTLPDLGLAA…AAPGQLSARE (221 aa)) are 3-dehydroquinase. The active-site Proton acceptor; for 3-dehydroquinate dehydratase activity is the histidine 1181. The Schiff-base intermediate with substrate; for 3-dehydroquinate dehydratase activity role is filled by lysine 1209. A shikimate dehydrogenase region spans residues 1291 to 1595 (AKKFAVIGNP…MGVLPSEDIS (305 aa)).

It in the N-terminal section; belongs to the sugar phosphate cyclases superfamily. Dehydroquinate synthase family. This sequence in the 2nd section; belongs to the EPSP synthase family. In the 3rd section; belongs to the shikimate kinase family. The protein in the 4th section; belongs to the type-I 3-dehydroquinase family. It in the C-terminal section; belongs to the shikimate dehydrogenase family. In terms of assembly, homodimer. Requires Zn(2+) as cofactor.

The protein resides in the cytoplasm. It carries out the reaction 7-phospho-2-dehydro-3-deoxy-D-arabino-heptonate = 3-dehydroquinate + phosphate. The enzyme catalyses 3-dehydroquinate = 3-dehydroshikimate + H2O. The catalysed reaction is shikimate + NADP(+) = 3-dehydroshikimate + NADPH + H(+). It catalyses the reaction shikimate + ATP = 3-phosphoshikimate + ADP + H(+). It carries out the reaction 3-phosphoshikimate + phosphoenolpyruvate = 5-O-(1-carboxyvinyl)-3-phosphoshikimate + phosphate. The protein operates within metabolic intermediate biosynthesis; chorismate biosynthesis; chorismate from D-erythrose 4-phosphate and phosphoenolpyruvate: step 2/7. It functions in the pathway metabolic intermediate biosynthesis; chorismate biosynthesis; chorismate from D-erythrose 4-phosphate and phosphoenolpyruvate: step 3/7. It participates in metabolic intermediate biosynthesis; chorismate biosynthesis; chorismate from D-erythrose 4-phosphate and phosphoenolpyruvate: step 4/7. Its pathway is metabolic intermediate biosynthesis; chorismate biosynthesis; chorismate from D-erythrose 4-phosphate and phosphoenolpyruvate: step 5/7. The protein operates within metabolic intermediate biosynthesis; chorismate biosynthesis; chorismate from D-erythrose 4-phosphate and phosphoenolpyruvate: step 6/7. Functionally, the AROM polypeptide catalyzes 5 consecutive enzymatic reactions in prechorismate polyaromatic amino acid biosynthesis. The polypeptide is Pentafunctional AROM polypeptide (Ajellomyces capsulatus (strain H143) (Darling's disease fungus)).